The primary structure comprises 244 residues: MEIVSMRDMLKAGVHFGHQTRYWNPKMKPFIFGSRNKVHIINLEKTLPMFNFALSELKKISLKKGKILFVGTKRAASKKIKETALNCNQFYVNHRWLGGMLTNWKTVRQSIKRLKDLETESQDGTFSKITKKEALIRTRELSKLENSLGGIKNMGGLPDCLFVIDAAHENIAIKEANNLGIPVFAIVDTNSNPDGVDYVIPGNDDAIRSVTLYLQAVSLSICKNQNGNSFSEMLLDSDKKMNIE.

Belongs to the universal ribosomal protein uS2 family.

This chain is Small ribosomal subunit protein uS2, found in Buchnera aphidicola subsp. Schizaphis graminum (strain Sg).